The primary structure comprises 575 residues: Cyclic nucleotide-gated channel alpha-4 (575 aa).

Residues Met-1 to Leu-38 lie on the Cytoplasmic side of the membrane. The chain crosses the membrane as a helical span at residues Asn-39–Asp-60. Over Leu-61–Phe-70 the chain is Extracellular. A helical membrane pass occupies residues Val-71–Gly-91. Residues Phe-92 to Leu-116 lie on the Cytoplasmic side of the membrane. The chain crosses the membrane as a helical span at residues Leu-117–His-135. Topologically, residues Ile-136–Arg-140 are extracellular. The chain crosses the membrane as a helical span at residues Leu-141 to Thr-159. Over Arg-160 to Ala-166 the chain is Cytoplasmic. The tract at residues Pro-164–Met-272 is ion conduction pathway. The helical transmembrane segment at Phe-167–Leu-190 threads the bilayer. Over Ser-191–Arg-213 the chain is Extracellular. Transmembrane regions (helical) follow at residues Leu-214–Val-248 and Gly-249–Asn-273. The tract at residues Thr-231 to Asp-234 is selectivity filter. The interval Thr-274–Gln-350 is C-linker. At Thr-274 to Glu-575 the chain is on the cytoplasmic side. The IQ-type signature appears at Leu-292 to Arg-302. Ile-348–Ile-471 lines the a nucleoside 3',5'-cyclic phosphate pocket. The interval Ala-354–Lys-474 is cyclic nucleotide-binding domain. 4 residues coordinate 3',5'-cyclic GMP: Gly-414, Ser-417, Arg-430, and Thr-431. 3',5'-cyclic AMP-binding residues include Arg-430 and Thr-431. Residues Thr-493–Glu-547 are a coiled coil. Positions Thr-536–Glu-575 are disordered. Over residues Asp-544–Pro-554 the composition is skewed to acidic residues. The span at Thr-558–Gly-567 shows a compositional bias: basic and acidic residues.

The protein belongs to the cyclic nucleotide-gated cation channel (TC 1.A.1.5) family. CNGA4 subfamily. In terms of assembly, the olfactory cyclic nucleotide-gated channel is an heterotetramer composed of CNGA2, CNGA4 and CNGB1b subunits with 2:1:1 stoichiometry. As to expression, expressed in the olfactory epithelium.

It localises to the cell projection. It is found in the cilium membrane. The catalysed reaction is Ca(2+)(in) = Ca(2+)(out). It carries out the reaction Na(+)(in) = Na(+)(out). It catalyses the reaction K(+)(in) = K(+)(out). The enzyme catalyses NH4(+)(in) = NH4(+)(out). The catalysed reaction is Rb(+)(in) = Rb(+)(out). It carries out the reaction Li(+)(in) = Li(+)(out). It catalyses the reaction Cs(+)(in) = Cs(+)(out). Its activity is regulated as follows. Ca(2+)-calmodulin exerts its inhibitory effect in cAMP sensitivity by binding to IQ-like motif of CNGA4 and preferably binds to the channel in the closed state. Inhibition by PIP3 of the CNG channel probably occurs via CGNA2 binding. In terms of biological role, pore-forming subunit of the olfactory cyclic nucleotide-gated channel. Operates in the cilia of olfactory sensory neurons where chemical stimulation of the odorant is converted to an electrical signal. Mediates odorant-induced cAMP-dependent Ca(2+) influx triggering neuron depolarization. The rise of intracellular Ca(2+) levels potentiates the olfactory response by activating Ca(2+)-dependent Cl(-) channels, but it also serves as a negative feedback signal to desensitize the channel for rapid adaptation to odorants. Conducts cGMP- and cAMP-gated ion currents, with permeability for monovalent and divalent cations. Conducts cAMP- and cGMP-gated ion currents, with permeability for monovalent and divalent cations. May conduct nitric oxide-gated Ca(2+) currents relevant to neurons of vomeronasal organ, a system involved in the perception of pheromones. The chain is Cyclic nucleotide-gated channel alpha-4 from Mus musculus (Mouse).